The chain runs to 83 residues: Hepcidin-2 (83 aa).

A signal peptide spans 1–26 (MALSTRTQAACLLLLLLASLSSTTYL). The propeptide occupies 27 to 53 (QQQMRQTTELQPLHGEESRADIAIPMQ). Disulfide bonds link Cys-65–Cys-81, Cys-68–Cys-71, Cys-69–Cys-77, and Cys-72–Cys-80.

Belongs to the hepcidin family. As to expression, highly expressed in the liver and to a much lesser extent in the heart. Also expressed in pancreas.

It is found in the secreted. Functionally, seems to act as a signaling molecule involved in the maintenance of iron homeostasis. This is Hepcidin-2 (Hamp2) from Mus musculus (Mouse).